A 145-amino-acid polypeptide reads, in one-letter code: Sporulation-specific cell division protein Francci3_3418 (145 aa).

It belongs to the SsgA family.

It is found in the cell septum. Functionally, involved in sporulation-specific cell division. The chain is Sporulation-specific cell division protein Francci3_3418 from Frankia casuarinae (strain DSM 45818 / CECT 9043 / HFP020203 / CcI3).